The primary structure comprises 459 residues: uncharacterized protein (459 aa).

Positions 2–60 (NLRVKQKIPLKIKRMGINGEGIGFYKRTLVFVPGALKGEEIFCQITSVKHNFVQARLLT) constitute a TRAM domain. 4 residues coordinate [4Fe-4S] cluster: C73, C79, C82, and C162. Residues Q284, Y313, D334, and D382 each coordinate S-adenosyl-L-methionine. C409 (nucleophile) is an active-site residue.

It belongs to the class I-like SAM-binding methyltransferase superfamily. RNA M5U methyltransferase family.

This is an uncharacterized protein from Streptococcus mutans serotype c (strain ATCC 700610 / UA159).